The following is a 308-amino-acid chain: Homeobox-leucine zipper protein HOX2 (308 aa).

2 disordered regions span residues 15–36 and 71–117; these read QGSL…SSPW and QGRA…RKKL. Positions 74–88 are enriched in low complexity; the sequence is ASTSPDSAAALSSAS. Residues 112–171 constitute a DNA-binding region (homeobox); it reads GGRKKLRLSKDQAAVLEECFKTHSTLNPKQKVALANRLGLRPRQVEVWFQNRRARTKLKQ. The leucine-zipper stretch occupies residues 170–214; the sequence is KQTEVDCEYLKRWCERLADENKRLEKELADLRALKAAPSPASASA.

The protein belongs to the HD-ZIP homeobox family. Class II subfamily. In terms of assembly, homodimer. May form a heterodimer with HOX1, HOX3 or HOX7. Expressed in seedlings, roots, leaves, nodes, internodes, flowers and embryo.

The protein resides in the nucleus. Probable transcription factor that binds to the DNA sequence 5'-CAAT[GC]ATTG-3'. The sequence is that of Homeobox-leucine zipper protein HOX2 (HOX2) from Oryza sativa subsp. indica (Rice).